The sequence spans 382 residues: Mannitol-1-phosphate 5-dehydrogenase (382 aa).

Residue 3–14 (ALHFGAGNIGRG) coordinates NAD(+).

Belongs to the mannitol dehydrogenase family.

The catalysed reaction is D-mannitol 1-phosphate + NAD(+) = beta-D-fructose 6-phosphate + NADH + H(+). The chain is Mannitol-1-phosphate 5-dehydrogenase from Pectobacterium atrosepticum (strain SCRI 1043 / ATCC BAA-672) (Erwinia carotovora subsp. atroseptica).